The sequence spans 550 residues: Tyrosinase HcTyr2 (550 aa).

Positions 56, 84, 93, 282, 286, and 326 each coordinate Cu cation.

The protein belongs to the tyrosinase family. It depends on Cu(2+) as a cofactor.

The catalysed reaction is L-tyrosine + O2 = L-dopaquinone + H2O. It catalyses the reaction 2 L-tyrosine + O2 = 2 L-dopa. The enzyme catalyses 2 L-dopa + O2 = 2 L-dopaquinone + 2 H2O. Copper-containing oxidase that catalyzes the conversion of L-tyrosine to L-dopa and then to L-dopaquinone. Can use various phenols such as p-coumaric acid, phenol, pyrocatechol, syringol or pyrogallol. Accepts several of the constituents of lignin and potentially participates in lignin functionalization. The polypeptide is Tyrosinase HcTyr2 (Hahella sp. (strain CCB-MM4)).